Consider the following 153-residue polypeptide: 6,7-dimethyl-8-ribityllumazine synthase (153 aa).

Residues Phe-22, 56–58, and 80–82 contribute to the 5-amino-6-(D-ribitylamino)uracil site; these read AFE and TVI. 85-86 is a binding site for (2S)-2-hydroxy-3-oxobutyl phosphate; sequence ST. The Proton donor role is filled by His-88. Residue Phe-113 coordinates 5-amino-6-(D-ribitylamino)uracil. Residue Arg-127 participates in (2S)-2-hydroxy-3-oxobutyl phosphate binding.

The protein belongs to the DMRL synthase family. Forms an icosahedral capsid composed of 60 subunits, arranged as a dodecamer of pentamers.

It catalyses the reaction (2S)-2-hydroxy-3-oxobutyl phosphate + 5-amino-6-(D-ribitylamino)uracil = 6,7-dimethyl-8-(1-D-ribityl)lumazine + phosphate + 2 H2O + H(+). The protein operates within cofactor biosynthesis; riboflavin biosynthesis; riboflavin from 2-hydroxy-3-oxobutyl phosphate and 5-amino-6-(D-ribitylamino)uracil: step 1/2. Catalyzes the formation of 6,7-dimethyl-8-ribityllumazine by condensation of 5-amino-6-(D-ribitylamino)uracil with 3,4-dihydroxy-2-butanone 4-phosphate. This is the penultimate step in the biosynthesis of riboflavin. The polypeptide is 6,7-dimethyl-8-ribityllumazine synthase (Glaesserella parasuis serovar 5 (strain SH0165) (Haemophilus parasuis)).